A 619-amino-acid chain; its full sequence is Chaperone protein HscA homolog (619 aa).

It belongs to the heat shock protein 70 family.

Its function is as follows. Chaperone involved in the maturation of iron-sulfur cluster-containing proteins. Has a low intrinsic ATPase activity which is markedly stimulated by HscB. The protein is Chaperone protein HscA homolog of Acinetobacter baumannii (strain ACICU).